The following is a 90-amino-acid chain: Probable Fe(2+)-trafficking protein (90 aa).

This sequence belongs to the Fe(2+)-trafficking protein family.

In terms of biological role, could be a mediator in iron transactions between iron acquisition and iron-requiring processes, such as synthesis and/or repair of Fe-S clusters in biosynthetic enzymes. The sequence is that of Probable Fe(2+)-trafficking protein from Pasteurella multocida (strain Pm70).